The chain runs to 228 residues: uncharacterized protein (228 aa).

One can recognise a Response regulatory domain in the interval 5–119 (HILIVEDEEK…ELLARIRAAL (115 aa)). Asp54 is subject to 4-aspartylphosphate. Residues 130–228 (GTFLTYDDLR…IRGVGYAIKG (99 aa)) constitute a DNA-binding region (ompR/PhoB-type).

In terms of processing, phosphorylated by YkoH.

It localises to the cytoplasm. Functionally, probable member of the two-component regulatory system YkoH/YkoG. This is an uncharacterized protein from Bacillus subtilis (strain 168).